The following is a 240-amino-acid chain: Aquaporin SIP1-1 (240 aa).

Transmembrane regions (helical) follow at residues 13–33 and 44–64; these read LMTFSWVVLSATFGIQTAAII and APLVILTSLIFVYVSIFTVIF. The NPA 1 motif lies at 70–72; that stretch reads NPT. 3 helical membrane-spanning segments follow: residues 89 to 109, 132 to 152, and 163 to 183; these read SLAIRLPAQAIGAAGGALAIM, GAIAETILSFGITFAVLLIIL, and FLLALATISFVVAGSKYTGPA. An NPA 2 motif is present at residues 185–187; it reads NPA. A helical membrane pass occupies residues 203 to 223; it reads DHIYVYWISSFVGALSAALLF.

This sequence belongs to the MIP/aquaporin (TC 1.A.8) family. SIP (TC 1.A.8.10) subfamily. In terms of tissue distribution, expressed in roots and above ground. Expressed in elongating regions of the root tips, trichome cells of the rosette leaves, vascular tissues of the flower petals, stigma, stamens (anthers and filaments), pollen and the top and bottom (receptacle) of siliques.

The protein resides in the endoplasmic reticulum membrane. Its function is as follows. Water channel required to facilitate the transport of water across cell membrane. The chain is Aquaporin SIP1-1 (SIP1-1) from Arabidopsis thaliana (Mouse-ear cress).